The chain runs to 125 residues: Ribosome-binding factor A (125 aa).

This sequence belongs to the RbfA family. As to quaternary structure, monomer. Binds 30S ribosomal subunits, but not 50S ribosomal subunits or 70S ribosomes.

The protein resides in the cytoplasm. One of several proteins that assist in the late maturation steps of the functional core of the 30S ribosomal subunit. Associates with free 30S ribosomal subunits (but not with 30S subunits that are part of 70S ribosomes or polysomes). Required for efficient processing of 16S rRNA. May interact with the 5'-terminal helix region of 16S rRNA. The polypeptide is Ribosome-binding factor A (Wigglesworthia glossinidia brevipalpis).